The primary structure comprises 444 residues: UDP-N-acetylmuramate--L-alanine ligase (444 aa).

110–116 provides a ligand contact to ATP; it reads GAHGKTS.

Belongs to the MurCDEF family.

The protein localises to the cytoplasm. It catalyses the reaction UDP-N-acetyl-alpha-D-muramate + L-alanine + ATP = UDP-N-acetyl-alpha-D-muramoyl-L-alanine + ADP + phosphate + H(+). It functions in the pathway cell wall biogenesis; peptidoglycan biosynthesis. Cell wall formation. This Streptococcus sanguinis (strain SK36) protein is UDP-N-acetylmuramate--L-alanine ligase.